The following is a 403-amino-acid chain: MSFSQAVSGLNAAATNLDVIGNNIANSATYGFKSGTASFADMFAGSKVGLGVKVAGITQDFTDGTTTNTGRGLDVAISQNGFFRLVDSNGSVFYSRNGQFKLDENRNLVNMQGMQLTGYPATGTPPTIQQGANPAPITIPNTLMAAKSTTTASMQINLNSTDPVPSKTPFSVSDADSYNKKGTVTVYDSQGNAHDMNVYFVKTKDNEWAVYTHDSSDPAATAPTTASTTLKFNENGILESGGTVNITTGTINGATAATFSLSFLNSMQQNTGANNIVATNQNGYKPGDLVSYQINNDGTVVGNYSNEQEQVLGQIVLANFANNEGLASQGDNVWAATQASGVALLGTAGSGNFGKLTNGALEASNVDLSKELVNMIVAQRNYQSNAQTIKTQDQILNTLVNLR.

Belongs to the flagella basal body rod proteins family.

Its subcellular location is the bacterial flagellum basal body. The protein is Flagellar hook protein FlgE (flgE) of Salmonella typhi.